A 740-amino-acid polypeptide reads, in one-letter code: Ion-translocating oxidoreductase complex subunit C (740 aa).

2 4Fe-4S ferredoxin-type domains span residues 369-397 (GEPQ…QQLY) and 407-436 (KATT…VQYF). 8 residues coordinate [4Fe-4S] cluster: cysteine 377, cysteine 380, cysteine 383, cysteine 387, cysteine 416, cysteine 419, cysteine 422, and cysteine 426. A disordered region spans residues 602–718 (KLEQQQANAE…EEQVDPRKAA (117 aa)).

The protein belongs to the 4Fe4S bacterial-type ferredoxin family. RnfC subfamily. As to quaternary structure, the complex is composed of six subunits: RsxA, RsxB, RsxC, RsxD, RsxE and RsxG. [4Fe-4S] cluster serves as cofactor.

Its subcellular location is the cell inner membrane. In terms of biological role, part of a membrane-bound complex that couples electron transfer with translocation of ions across the membrane. Required to maintain the reduced state of SoxR. This is Ion-translocating oxidoreductase complex subunit C from Shigella sonnei (strain Ss046).